The following is a 458-amino-acid chain: Argininosuccinate lyase (458 aa).

Belongs to the lyase 1 family. Argininosuccinate lyase subfamily.

The protein resides in the cytoplasm. It carries out the reaction 2-(N(omega)-L-arginino)succinate = fumarate + L-arginine. The protein operates within amino-acid biosynthesis; L-arginine biosynthesis; L-arginine from L-ornithine and carbamoyl phosphate: step 3/3. This chain is Argininosuccinate lyase, found in Buchnera aphidicola subsp. Baizongia pistaciae (strain Bp).